The following is a 418-amino-acid chain: Gamma-glutamyl phosphate reductase (418 aa).

This sequence belongs to the gamma-glutamyl phosphate reductase family.

Its subcellular location is the cytoplasm. It carries out the reaction L-glutamate 5-semialdehyde + phosphate + NADP(+) = L-glutamyl 5-phosphate + NADPH + H(+). Its pathway is amino-acid biosynthesis; L-proline biosynthesis; L-glutamate 5-semialdehyde from L-glutamate: step 2/2. In terms of biological role, catalyzes the NADPH-dependent reduction of L-glutamate 5-phosphate into L-glutamate 5-semialdehyde and phosphate. The product spontaneously undergoes cyclization to form 1-pyrroline-5-carboxylate. The polypeptide is Gamma-glutamyl phosphate reductase (Teredinibacter turnerae (strain ATCC 39867 / T7901)).